The chain runs to 307 residues: UDP-3-O-acyl-N-acetylglucosamine deacetylase (307 aa).

Positions 78, 241, and 245 each coordinate Zn(2+). His268 serves as the catalytic Proton donor.

Belongs to the LpxC family. Zn(2+) is required as a cofactor.

It carries out the reaction a UDP-3-O-[(3R)-3-hydroxyacyl]-N-acetyl-alpha-D-glucosamine + H2O = a UDP-3-O-[(3R)-3-hydroxyacyl]-alpha-D-glucosamine + acetate. The protein operates within glycolipid biosynthesis; lipid IV(A) biosynthesis; lipid IV(A) from (3R)-3-hydroxytetradecanoyl-[acyl-carrier-protein] and UDP-N-acetyl-alpha-D-glucosamine: step 2/6. Its function is as follows. Catalyzes the hydrolysis of UDP-3-O-myristoyl-N-acetylglucosamine to form UDP-3-O-myristoylglucosamine and acetate, the committed step in lipid A biosynthesis. This chain is UDP-3-O-acyl-N-acetylglucosamine deacetylase, found in Bordetella avium (strain 197N).